Here is a 37-residue protein sequence, read N- to C-terminus: Large ribosomal subunit protein bL36 (37 aa).

The protein belongs to the bacterial ribosomal protein bL36 family.

The polypeptide is Large ribosomal subunit protein bL36 (Mycoplasmopsis synoviae (strain 53) (Mycoplasma synoviae)).